The primary structure comprises 125 residues: MAASRSSITTLLLLIVAVALGYGILPISAKTSVARQLREQVDFVDAAALSESATSSSSSSALDHKSSAPGEATNASETEHSAASTASEPKHEGPTMMSFVGPAAAGVLAILLIGAVIAFKKRMNK.

The N-terminal stretch at 1–21 is a signal peptide; that stretch reads MAASRSSITTLLLLIVAVALG. A RxLR motif is present at residues 35 to 38; the sequence is RQLR. A compositionally biased stretch (low complexity) spans 51–87; it reads ESATSSSSSSALDHKSSAPGEATNASETEHSAASTAS. A disordered region spans residues 51-96; the sequence is ESATSSSSSSALDHKSSAPGEATNASETEHSAASTASEPKHEGPTM. N74 carries N-linked (GlcNAc...) asparagine glycosylation. The chain crosses the membrane as a helical span at residues 99–119; the sequence is FVGPAAAGVLAILLIGAVIAF.

It belongs to the RxLR effector family.

Its subcellular location is the secreted. The protein resides in the host cell membrane. Effector that acts as a broad suppressor of cell death to interrupt plant immunity. Inhibits cell death induced by cell death-inducing proteins, including the PAMP elicitor INF1 from P.infestans. The sequence is that of Secreted RxLR effector protein 55 from Plasmopara viticola (Downy mildew of grapevine).